Here is a 968-residue protein sequence, read N- to C-terminus: RNA polymerase-associated protein RapA (968 aa).

Residues 163–332 (EVGRRYAPRV…FARLRLLDPD (170 aa)) enclose the Helicase ATP-binding domain. Residue 176–183 (DEVGLGKT) coordinates ATP. The DEAH box motif lies at 278-281 (DEAH). One can recognise a Helicase C-terminal domain in the interval 491–643 (RVDWLIAFLK…ELTCPSGHVL (153 aa)).

Belongs to the SNF2/RAD54 helicase family. RapA subfamily. Interacts with the RNAP. Has a higher affinity for the core RNAP than for the holoenzyme. Its ATPase activity is stimulated by binding to RNAP.

Functionally, transcription regulator that activates transcription by stimulating RNA polymerase (RNAP) recycling in case of stress conditions such as supercoiled DNA or high salt concentrations. Probably acts by releasing the RNAP, when it is trapped or immobilized on tightly supercoiled DNA. Does not activate transcription on linear DNA. Probably not involved in DNA repair. This is RNA polymerase-associated protein RapA from Shewanella sp. (strain W3-18-1).